Reading from the N-terminus, the 113-residue chain is MQAKAILRNFRMSPQKVRLVADLVRGKNVTEALGILQYLPHKAAPEIARVIKSAKANADHNYQMSPEDLVVKTIMVDAGPVLKRYMPRARGRGDRILKRSSHITVIVDDGEVL.

The protein belongs to the universal ribosomal protein uL22 family. Part of the 50S ribosomal subunit.

In terms of biological role, this protein binds specifically to 23S rRNA; its binding is stimulated by other ribosomal proteins, e.g. L4, L17, and L20. It is important during the early stages of 50S assembly. It makes multiple contacts with different domains of the 23S rRNA in the assembled 50S subunit and ribosome. Its function is as follows. The globular domain of the protein is located near the polypeptide exit tunnel on the outside of the subunit, while an extended beta-hairpin is found that lines the wall of the exit tunnel in the center of the 70S ribosome. The polypeptide is Large ribosomal subunit protein uL22 (Herpetosiphon aurantiacus (strain ATCC 23779 / DSM 785 / 114-95)).